A 30-amino-acid chain; its full sequence is ATP-dependent Clp protease ATP-binding subunit ClpA homolog (30 aa).

Belongs to the ClpA/ClpB family.

The protein localises to the plastid. The protein resides in the chloroplast. Functionally, may interact with a ClpP-like protease involved in degradation of denatured proteins in the chloroplast. This chain is ATP-dependent Clp protease ATP-binding subunit ClpA homolog, found in Pinus pinaster (Maritime pine).